The following is a 189-amino-acid chain: Dirigent protein 21 (189 aa).

Positions 1-19 are cleaved as a signal peptide; that stretch reads MASLYLLLLLPLFLALILA. N-linked (GlcNAc...) asparagine glycosylation is found at Asn-72 and Asn-173.

It belongs to the plant dirigent protein family. Homodimer.

It is found in the secreted. In terms of biological role, dirigent proteins impart stereoselectivity on the phenoxy radical-coupling reaction, yielding optically active lignans from two molecules of coniferyl alcohol in the biosynthesis of lignans, flavonolignans, and alkaloids and thus plays a central role in plant secondary metabolism. The protein is Dirigent protein 21 (DIR21) of Arabidopsis thaliana (Mouse-ear cress).